A 344-amino-acid polypeptide reads, in one-letter code: Methionine aminopeptidase 1C, chloroplastic/mitochondrial (344 aa).

Residue H172 coordinates substrate. A divalent metal cation contacts are provided by D189, D200, and H262. H269 serves as a coordination point for substrate. A divalent metal cation-binding residues include E296 and E327.

Belongs to the peptidase M24A family. Methionine aminopeptidase type 1 subfamily. Co(2+) is required as a cofactor. Requires Zn(2+) as cofactor. It depends on Mn(2+) as a cofactor. The cofactor is Fe(2+). In terms of tissue distribution, ubiquitous.

Its subcellular location is the plastid. It is found in the chloroplast. The protein localises to the mitochondrion. It carries out the reaction Release of N-terminal amino acids, preferentially methionine, from peptides and arylamides.. Its function is as follows. Removes the N-terminal methionine from nascent proteins. The N-terminal methionine is often cleaved when the second residue in the primary sequence is small and uncharged (Met-Ala-, Cys, Gly, Pro, Ser, Thr, or Val). This is Methionine aminopeptidase 1C, chloroplastic/mitochondrial (MAP1C) from Arabidopsis thaliana (Mouse-ear cress).